The chain runs to 243 residues: Nuclear ubiquitous casein and cyclin-dependent kinase substrate 1 (243 aa).

The tract at residues 1–243 (MSRPVRNRKV…SEDEAASGED (243 aa)) is disordered. Tyr13 is modified (phosphotyrosine). 2 positions are modified to phosphoserine: Ser14 and Ser19. Phosphotyrosine is present on Tyr26. Over residues 35–51 (KKIRSSPREAKNKRRSG) the composition is skewed to basic residues. A phosphoserine mark is found at Ser54, Ser58, Ser61, Ser73, Ser75, and Ser79. Positions 64 to 77 (KDVKTKKDDSHSAE) are enriched in basic and acidic residues. Over residues 91 to 100 (QQRQAASKAA) the composition is skewed to low complexity. Acidic residues predominate over residues 111–124 (VGSEEEPEEDDEAP). Phosphoserine occurs at positions 113, 130, 132, and 144. Residues 132 to 145 (SDEDFLMEDDDDSD) are compositionally biased toward acidic residues. Over residues 149–174 (SKKKNKKMVKKSKPERKEKKMPKPRL) the composition is skewed to basic residues. Thr179 bears the Phosphothreonine mark. Phosphoserine is present on Ser181. Basic and acidic residues predominate over residues 197-206 (TSKEKTPSPK). Thr202 carries the phosphothreonine modification. Phosphoserine occurs at positions 204, 214, 223, 229, 234, and 240. Over residues 232–243 (EGSEDEAASGED) the composition is skewed to acidic residues.

Does not interact with RAD51. In terms of processing, phosphorylated in an ATM-dependent manner in response to DNA damage. Phosphorylated by CDK1 and casein kinase.

The protein localises to the nucleus. The protein resides in the chromosome. Its function is as follows. Chromatin-associated protein involved in DNA repair by promoting homologous recombination (HR). Binds double-stranded DNA (dsDNA) and secondary DNA structures, such as D-loop structures, but with less affinity than RAD51AP1. In Rattus norvegicus (Rat), this protein is Nuclear ubiquitous casein and cyclin-dependent kinase substrate 1.